The following is a 246-amino-acid chain: Probable transcriptional regulatory protein HAPS_0943 (246 aa).

It belongs to the TACO1 family.

The protein resides in the cytoplasm. In Glaesserella parasuis serovar 5 (strain SH0165) (Haemophilus parasuis), this protein is Probable transcriptional regulatory protein HAPS_0943.